The primary structure comprises 422 residues: SH2 domain-containing protein 4A (422 aa).

Residues S117 and S123 each carry the phosphoserine modification. Disordered stretches follow at residues 141–190 and 202–282; these read PQNV…EDEK and SEWQ…VIRT. Basic and acidic residues-rich tracts occupy residues 163–190 and 212–231; these read TKKD…EDEK and KAAD…DYKR. S233 bears the Phosphoserine mark. Positions 316 to 408 constitute an SH2 domain; that stretch reads WFHGILTLKK…LGKELLLFPC (93 aa).

Interacts with ESR1.

Its subcellular location is the cytoplasm. Inhibits estrogen-induced cell proliferation by competing with PLCG for binding to ESR1, blocking the effect of estrogen on PLCG and repressing estrogen-induced proliferation. May play a role in T-cell development and function. In Rattus norvegicus (Rat), this protein is SH2 domain-containing protein 4A (Sh2d4a).